The sequence spans 133 residues: Ribosome-binding factor A (133 aa).

This sequence belongs to the RbfA family. In terms of assembly, monomer. Binds 30S ribosomal subunits, but not 50S ribosomal subunits or 70S ribosomes.

It localises to the cytoplasm. Its function is as follows. One of several proteins that assist in the late maturation steps of the functional core of the 30S ribosomal subunit. Associates with free 30S ribosomal subunits (but not with 30S subunits that are part of 70S ribosomes or polysomes). Required for efficient processing of 16S rRNA. May interact with the 5'-terminal helix region of 16S rRNA. This Bordetella pertussis (strain Tohama I / ATCC BAA-589 / NCTC 13251) protein is Ribosome-binding factor A.